The sequence spans 85 residues: Small ribosomal subunit protein uS17 (85 aa).

The protein belongs to the universal ribosomal protein uS17 family. Part of the 30S ribosomal subunit.

One of the primary rRNA binding proteins, it binds specifically to the 5'-end of 16S ribosomal RNA. This Desulforudis audaxviator (strain MP104C) protein is Small ribosomal subunit protein uS17.